The primary structure comprises 444 residues: Na(+)/H(+) antiporter NhaA 2 (444 aa).

Transmembrane regions (helical) follow at residues phenylalanine 21–phenylalanine 41, phenylalanine 64–leucine 84, alanine 102–leucine 122, glycine 131–glycine 151, valine 160–phenylalanine 180, glutamate 185–isoleucine 205, histidine 212–isoleucine 232, alanine 307–valine 327, leucine 342–leucine 362, tryptophan 377–valine 397, and isoleucine 413–asparagine 433.

It belongs to the NhaA Na(+)/H(+) (TC 2.A.33) antiporter family.

It is found in the cell inner membrane. The catalysed reaction is Na(+)(in) + 2 H(+)(out) = Na(+)(out) + 2 H(+)(in). Its function is as follows. Na(+)/H(+) antiporter that extrudes sodium in exchange for external protons. In Helicobacter hepaticus (strain ATCC 51449 / 3B1), this protein is Na(+)/H(+) antiporter NhaA 2.